A 271-amino-acid chain; its full sequence is Tryptophan synthase alpha chain (271 aa).

Catalysis depends on proton acceptor residues Glu49 and Asp60.

This sequence belongs to the TrpA family. In terms of assembly, tetramer of two alpha and two beta chains.

The enzyme catalyses (1S,2R)-1-C-(indol-3-yl)glycerol 3-phosphate + L-serine = D-glyceraldehyde 3-phosphate + L-tryptophan + H2O. Its pathway is amino-acid biosynthesis; L-tryptophan biosynthesis; L-tryptophan from chorismate: step 5/5. In terms of biological role, the alpha subunit is responsible for the aldol cleavage of indoleglycerol phosphate to indole and glyceraldehyde 3-phosphate. The sequence is that of Tryptophan synthase alpha chain from Burkholderia mallei (strain NCTC 10247).